A 356-amino-acid polypeptide reads, in one-letter code: Probable neutral protease 2 homolog TRV_06370 (356 aa).

The signal sequence occupies residues 1–17; it reads MQFTALLAALGAPLALA. A propeptide spanning residues 18 to 183 is cleaved from the precursor; that stretch reads ASIPAAAHNH…DDSTGVIDKR (166 aa). 2 cysteine pairs are disulfide-bonded: Cys-191-Cys-262 and Cys-269-Cys-287. Residue His-311 participates in Zn(2+) binding. Glu-312 is an active-site residue. His-315 and Asp-326 together coordinate Zn(2+).

The protein belongs to the peptidase M35 family. It depends on Zn(2+) as a cofactor.

Its subcellular location is the secreted. The enzyme catalyses Preferential cleavage of bonds with hydrophobic residues in P1'. Also 3-Asn-|-Gln-4 and 8-Gly-|-Ser-9 bonds in insulin B chain.. Functionally, probable secreted metalloprotease that shows high activities on basic nuclear substrates such as histone and protamine. May be involved in virulence. The protein is Probable neutral protease 2 homolog TRV_06370 of Trichophyton verrucosum (strain HKI 0517).